A 606-amino-acid polypeptide reads, in one-letter code: Kelch repeat and BTB domain-containing protein 8 (606 aa).

The region spanning 55–123 (TDIVVQVDHG…AYTSRVQLTE (69 aa)) is the BTB domain. One can recognise a BACK domain in the interval 158–258 (CIGVFSFADH…PLMEETFVEQ (101 aa)). Kelch repeat units follow at residues 342-396 (ELYI…HCCG), 397-447 (KLYA…EYKD), 449-487 (IYIL…VYKD), 488-534 (SIYY…KLVV), and 546-593 (TQVS…FECA).

It belongs to the KBTBD8 family. Component of the BCR(KBTBD8) E3 ubiquitin ligase complex.

Its subcellular location is the cytoplasm. The protein localises to the cytoskeleton. It localises to the spindle. The protein resides in the golgi apparatus. Substrate-specific adapter of a BCR (BTB-CUL3-RBX1) E3 ubiquitin ligase complex that acts as a regulator of neural crest specification. The BCR(KBTBD8) complex acts by mediating monoubiquitination of target proteins. The sequence is that of Kelch repeat and BTB domain-containing protein 8 (kbtbd8) from Xenopus tropicalis (Western clawed frog).